An 833-amino-acid chain; its full sequence is Homeobox-leucine zipper protein ATHB-8 (833 aa).

The homeobox DNA-binding region spans 12–75; sequence DNGKYVRYTP…NRRCREKQRK (64 aa). Residues 70–108 adopt a coiled-coil conformation; the sequence is REKQRKEASRLQAVNRKLTAMNKLLMEENDRLQKQVSHL. Residues 150–378 form the START domain; sequence RDASPAGLLS…ISQEISQPNV (229 aa).

The protein belongs to the HD-ZIP homeobox family. Class III subfamily. Interacts with ESR1 and ESR2. Interacts with ZPR3.

Its subcellular location is the nucleus. Its function is as follows. Probable transcription factor involved in the regulation of vascular development. May promote differentiation of precambial and cambial cells. This chain is Homeobox-leucine zipper protein ATHB-8 (ATHB-8), found in Arabidopsis thaliana (Mouse-ear cress).